A 696-amino-acid chain; its full sequence is Putative cyclic nucleotide-gated ion channel 13 (696 aa).

The Cytoplasmic portion of the chain corresponds to 1–81 (MAFGRNNRVR…QGSFLQNWNK (81 aa)). A disordered region spans residues 45-65 (KPLSFGSHNKKRDSNSSTTTQ). Residues 82–102 (IFLFASVIALAIDPLFFYIPI) form a helical membrane-spanning segment. Topologically, residues 103-116 (VDGERHCLNLHRNL) are extracellular. A helical membrane pass occupies residues 117 to 137 (EIAASVLRTFIDAFYIIHIVF). The Cytoplasmic portion of the chain corresponds to 138-170 (QFRTAYISPSSRVFGRGELVDDPKAIAIKYLSS). Residues 171–191 (YFIIDLLSILPLPQLVVLAVI) traverse the membrane as a helical segment. Topologically, residues 192 to 204 (PNVNKPVSLITKD) are extracellular. A helical membrane pass occupies residues 205–225 (YLITVIFTQYIPRILRIYPLY). The Cytoplasmic portion of the chain corresponds to 226-243 (TEVTRTSGIVTETAWAGA). A helical transmembrane segment spans residues 244 to 264 (AWNLSLYMLASHVFGALWYLI). Topologically, residues 265 to 367 (SVEREDRCWR…GQNLNTSKFV (103 aa)) are extracellular. The chain crosses the membrane as a helical span at residues 368–388 (GEIIFAVSICISGLVLFALLI). Residues 389–696 (GNMQKYLEST…SEPDFSLRNP (308 aa)) lie on the Cytoplasmic side of the membrane. A nucleoside 3',5'-cyclic phosphate-binding positions include 474-598 (LFEI…SKQL) and glutamate 545. Positions 590 to 605 (FRRLHSKQLQHTFRFY) are calmodulin-binding. The region spanning 610–639 (RTWGASFIQAAWRRHCRRKLARSLTEEEDR) is the IQ domain. The interval 677 to 696 (NNLPLLPPKPSEPDFSLRNP) is disordered.

This sequence belongs to the cyclic nucleotide-gated cation channel (TC 1.A.1.5) family. As to quaternary structure, homotetramer or heterotetramer.

The protein localises to the cell membrane. Functionally, putative cyclic nucleotide-gated ion channel. The sequence is that of Putative cyclic nucleotide-gated ion channel 13 (CNGC13) from Arabidopsis thaliana (Mouse-ear cress).